Consider the following 218-residue polypeptide: Thiopurine S-methyltransferase (218 aa).

S-adenosyl-L-methionine is bound by residues Trp10, Leu45, Glu66, and Arg123.

Belongs to the class I-like SAM-binding methyltransferase superfamily. TPMT family.

The protein resides in the cytoplasm. It catalyses the reaction S-adenosyl-L-methionine + a thiopurine = S-adenosyl-L-homocysteine + a thiopurine S-methylether.. This is Thiopurine S-methyltransferase from Pseudomonas paraeruginosa (strain DSM 24068 / PA7) (Pseudomonas aeruginosa (strain PA7)).